The chain runs to 283 residues: Pantothenate synthetase (283 aa).

30–37 (MGYYHSGH) lines the ATP pocket. Residue histidine 37 is the Proton donor of the active site. Glutamine 61 contributes to the (R)-pantoate binding site. Glutamine 61 contacts beta-alanine. 147 to 150 (GQKD) contacts ATP. Glutamine 153 contacts (R)-pantoate. ATP contacts are provided by residues valine 176 and 184-187 (MSSR).

Belongs to the pantothenate synthetase family. Homodimer.

It is found in the cytoplasm. The enzyme catalyses (R)-pantoate + beta-alanine + ATP = (R)-pantothenate + AMP + diphosphate + H(+). It participates in cofactor biosynthesis; (R)-pantothenate biosynthesis; (R)-pantothenate from (R)-pantoate and beta-alanine: step 1/1. Its function is as follows. Catalyzes the condensation of pantoate with beta-alanine in an ATP-dependent reaction via a pantoyl-adenylate intermediate. In Nitratidesulfovibrio vulgaris (strain DSM 19637 / Miyazaki F) (Desulfovibrio vulgaris), this protein is Pantothenate synthetase.